Consider the following 323-residue polypeptide: Putative divalent cation/proton antiporter TMEM165 (323 aa).

Positions 1–33 (MAASARGSGRAPTRRLLVLLLLPLLWAPAGVRA) are cleaved as a signal peptide. Residues 34–88 (GPEEDLSHRNQEPPAPAQQLQPQPAAVQGLEPARAEKGFTPAAPVHTNREDAATQ) lie on the Lumenal side of the membrane. A compositionally biased stretch (basic and acidic residues) spans 35–44 (PEEDLSHRNQ). A disordered region spans residues 35 to 60 (PEEDLSHRNQEPPAPAQQLQPQPAAV). Over residues 50–59 (AQQLQPQPAA) the composition is skewed to low complexity. Residues 89–109 (ANLGFIHAFVAAISVIIVSEL) traverse the membrane as a helical segment. At 110–126 (GDKTFFIAAIMAMRYNR) the chain is on the cytoplasmic side. Residues 127–147 (LTVLAGAMLALALMTCLSVLF) form a helical membrane-spanning segment. Residues 148 to 151 (GYAT) are Lumenal-facing. A helical transmembrane segment spans residues 152-172 (TVIPRVYTYYVSTALFAIFGI). Over 173–227 (RMLREGLKMSPDEGQEELEEVQAELKKKDEEFQRTKLLNGPDVETGTSTAIPQKK) the chain is Cytoplasmic. Positions 184–211 (DEGQEELEEVQAELKKKDEEFQRTKLLN) form a coiled coil. Residues 228 to 248 (WLHFISPIFVQALTLTFLAEW) form a helical membrane-spanning segment. Over 249 to 266 (GDRSQLTTIVLAAREDPY) the chain is Lumenal. Residues 267–287 (GVAVGGTVGHCLCTGLAVIGG) traverse the membrane as a helical segment. The Cytoplasmic segment spans residues 288 to 298 (RMIAQKISVRT). Residues 299–319 (VTIIGGIVFLAFAFSALFISP) form a helical membrane-spanning segment. At 320–323 (ESGF) the chain is on the lumenal side.

Belongs to the GDT1 family.

It localises to the golgi apparatus membrane. It carries out the reaction Ca(2+)(in) + n H(+)(out) = Ca(2+)(out) + n H(+)(in). The enzyme catalyses Mn(2+)(in) + n H(+)(out) = Mn(2+)(out) + n H(+)(in). Functionally, putative divalent cation:proton antiporter that exchanges calcium or manganese ions for protons across the Golgi membrane. Mediates the reversible transport of calcium or manganese to the Golgi lumen driven by the proton gradient and possibly the membrane potential generated by V-ATPase. Provides calcium or manganese cofactors to resident Golgi enzymes and contributes to the maintenance of an acidic luminal Golgi pH required for proper functioning of the secretory pathway. Promotes Ca(2+) storage within the Golgi lumen of the mammary epithelial cells to be then secreted into milk. The transport mechanism and stoichiometry remains to be elucidated. This is Putative divalent cation/proton antiporter TMEM165 from Rattus norvegicus (Rat).